The sequence spans 473 residues: GTPase Der (473 aa).

EngA-type G domains are found at residues 3–166 and 177–350; these read PVIA…ENPE and IRIG…ESAM. GTP-binding positions include 9–16, 56–60, 118–121, 183–190, 230–234, and 295–298; these read GRPNVGKS, DTGGL, NKTD, DTAGV, and NKWD. One can recognise a KH-like domain in the interval 351-435; the sequence is SKWPTNRLTA…PIRFEFKSGE (85 aa). Basic and acidic residues predominate over residues 444 to 458; the sequence is RLTPRQKVKKDNDLK. The interval 444–473 is disordered; the sequence is RLTPRQKVKKDNDLKKGRRIKKTRQKSVKR. Residues 459–473 are compositionally biased toward basic residues; sequence KGRRIKKTRQKSVKR.

The protein belongs to the TRAFAC class TrmE-Era-EngA-EngB-Septin-like GTPase superfamily. EngA (Der) GTPase family. As to quaternary structure, associates with the 50S ribosomal subunit.

GTPase that plays an essential role in the late steps of ribosome biogenesis. This chain is GTPase Der, found in Marinobacter nauticus (strain ATCC 700491 / DSM 11845 / VT8) (Marinobacter aquaeolei).